A 339-amino-acid chain; its full sequence is Phosphate acyltransferase (339 aa).

Belongs to the PlsX family. In terms of assembly, homodimer. Probably interacts with PlsY.

The protein localises to the cytoplasm. It carries out the reaction a fatty acyl-[ACP] + phosphate = an acyl phosphate + holo-[ACP]. Its pathway is lipid metabolism; phospholipid metabolism. In terms of biological role, catalyzes the reversible formation of acyl-phosphate (acyl-PO(4)) from acyl-[acyl-carrier-protein] (acyl-ACP). This enzyme utilizes acyl-ACP as fatty acyl donor, but not acyl-CoA. This Brachyspira hyodysenteriae (strain ATCC 49526 / WA1) protein is Phosphate acyltransferase.